The sequence spans 481 residues: MTFRFDNSYARDLEGFYVDWPAAPVPAPRLLRLNRPLAEELGLDPDLLEREGAEIFSGRRLPEGAHPLAQAYAGHQFGGFSPQLGDGRALLIGEITDRAGRRRDLQLKGSGRTPFSRGADGKAALGPVLREYLVGEAMHGLGIPTTRALAAVATGEPLLRQEGERPGAILTRVAASHIRVGTFQFFAARSDIDRVRRLADYAIARHYPELASAPEPYLAFYEAVAEAQAQLVARWMLVGFIHGVMNTDNMTISGETIDYGPCAFMEGYDPGTVFSSIDLQGRYAYGNQPYILAWNLARLGEALLPLLDGDPVRAADKATSVLETVGARYQGHWLAGMRAKLGLAGAEEGDARLAEDLLEAMRSQRADWTLTFRRLAEAVTDEGALRPLFRDPAALAGWLPRWRARLAPDAAERMRATNPIYIARNHRVEEALAAAHAGDLAPFDRLLEALADPFTERADRELFALPAPEGFDDSYRTFCGT.

ATP contacts are provided by glycine 85, glycine 87, arginine 88, lysine 108, aspartate 120, glycine 121, arginine 172, and arginine 179. Aspartate 248 (proton acceptor) is an active-site residue. Positions 249 and 258 each coordinate Mg(2+). Aspartate 258 provides a ligand contact to ATP.

It belongs to the SELO family. Mg(2+) serves as cofactor. Requires Mn(2+) as cofactor.

It carries out the reaction L-seryl-[protein] + ATP = 3-O-(5'-adenylyl)-L-seryl-[protein] + diphosphate. It catalyses the reaction L-threonyl-[protein] + ATP = 3-O-(5'-adenylyl)-L-threonyl-[protein] + diphosphate. The enzyme catalyses L-tyrosyl-[protein] + ATP = O-(5'-adenylyl)-L-tyrosyl-[protein] + diphosphate. The catalysed reaction is L-histidyl-[protein] + UTP = N(tele)-(5'-uridylyl)-L-histidyl-[protein] + diphosphate. It carries out the reaction L-seryl-[protein] + UTP = O-(5'-uridylyl)-L-seryl-[protein] + diphosphate. It catalyses the reaction L-tyrosyl-[protein] + UTP = O-(5'-uridylyl)-L-tyrosyl-[protein] + diphosphate. In terms of biological role, nucleotidyltransferase involved in the post-translational modification of proteins. It can catalyze the addition of adenosine monophosphate (AMP) or uridine monophosphate (UMP) to a protein, resulting in modifications known as AMPylation and UMPylation. The polypeptide is Protein nucleotidyltransferase YdiU (Cereibacter sphaeroides (strain ATCC 17023 / DSM 158 / JCM 6121 / CCUG 31486 / LMG 2827 / NBRC 12203 / NCIMB 8253 / ATH 2.4.1.) (Rhodobacter sphaeroides)).